The sequence spans 1026 residues: Multidrug resistance protein MdtC (1026 aa).

A run of 11 helical transmembrane segments spans residues 15–35 (ILIAAAITLCGILGFRLLPVA), 333–353 (EVEETLAISVALVILVVFLFL), 360–380 (LIPAVAVPVSLIGTFAAMYLC), 387–407 (LSLMALTIATGFVVDDAIVVL), 431–451 (VGFTVISMSLSLVAVFLPLLL), 463–483 (FAVTLSVAIGISLVVSLTLTP), 528–548 (LVGVVFLGTVALNIWLYIAIP), 853–873 (LILIVAAIATVYIVLGILYES), 897–917 (LFNAPFSLIALIGIMLLIGIV), 953–973 (PIMMTTLAALFGALPLVLSGG), and 984–1004 (ITIVGGLVMSQLLTLYTTPVV).

The protein belongs to the resistance-nodulation-cell division (RND) (TC 2.A.6) family. MdtC subfamily. Part of a tripartite efflux system composed of MdtA, MdtB and MdtC. MdtC forms a heteromultimer with MdtB.

The protein localises to the cell inner membrane. This Salmonella newport (strain SL254) protein is Multidrug resistance protein MdtC.